Reading from the N-terminus, the 216-residue chain is Imidazoleglycerol-phosphate dehydratase (216 aa).

Ser-211 carries the phosphoserine modification.

This sequence belongs to the imidazoleglycerol-phosphate dehydratase family.

The catalysed reaction is D-erythro-1-(imidazol-4-yl)glycerol 3-phosphate = 3-(imidazol-4-yl)-2-oxopropyl phosphate + H2O. The protein operates within amino-acid biosynthesis; L-histidine biosynthesis; L-histidine from 5-phospho-alpha-D-ribose 1-diphosphate: step 6/9. This is Imidazoleglycerol-phosphate dehydratase (his5) from Schizosaccharomyces pombe (strain 972 / ATCC 24843) (Fission yeast).